The primary structure comprises 192 residues: uncharacterized protein (192 aa).

A run of 2 helical transmembrane segments spans residues Ile-31–Glu-51 and Val-119–Ile-139.

The protein localises to the cell membrane. This is an uncharacterized protein from Thermotoga maritima (strain ATCC 43589 / DSM 3109 / JCM 10099 / NBRC 100826 / MSB8).